A 330-amino-acid polypeptide reads, in one-letter code: MTASRDIACRVRGFGAYTPVDVLTNFDLEKFVETTDEWITTRTGIRQRHRLAEGQNASDAATEAARLALADAGMEPGEITHVINATCTPDYLCPNTACLVEAKLGIMGAMAFDFNAACSGYVYGLSMARAIVAAQPEARVLLTATEALTRRLNWADRTTCVLFGDGAGASVITAEGEGALLEDVLCASDGNLGGLLTIGGGTHTPYAKGDPVGEDFFVQMNGRDVFKHAVRNMAAISQDVLARNGLTIDDVALVIPHQANLRIIEAVGDRLGVPAERVFVNLHEFGNTSAASVPLAIADARAKGVLRPGMRVLLATFGGGFTWGAALLHF.

Active-site residues include Cys-118 and His-257. The ACP-binding stretch occupies residues 258–262 (QANLR). Asn-287 is an active-site residue.

Belongs to the thiolase-like superfamily. FabH family. In terms of assembly, homodimer.

It is found in the cytoplasm. The enzyme catalyses malonyl-[ACP] + acetyl-CoA + H(+) = 3-oxobutanoyl-[ACP] + CO2 + CoA. The protein operates within lipid metabolism; fatty acid biosynthesis. Catalyzes the condensation reaction of fatty acid synthesis by the addition to an acyl acceptor of two carbons from malonyl-ACP. Catalyzes the first condensation reaction which initiates fatty acid synthesis and may therefore play a role in governing the total rate of fatty acid production. Possesses both acetoacetyl-ACP synthase and acetyl transacylase activities. Its substrate specificity determines the biosynthesis of branched-chain and/or straight-chain of fatty acids. The protein is Beta-ketoacyl-[acyl-carrier-protein] synthase III of Nitratidesulfovibrio vulgaris (strain DSM 19637 / Miyazaki F) (Desulfovibrio vulgaris).